The primary structure comprises 73 residues: Large ribosomal subunit protein bL31 (73 aa).

4 residues coordinate Zn(2+): Cys16, Cys18, Cys36, and Cys39.

Belongs to the bacterial ribosomal protein bL31 family. Type A subfamily. As to quaternary structure, part of the 50S ribosomal subunit. Zn(2+) serves as cofactor.

Functionally, binds the 23S rRNA. This chain is Large ribosomal subunit protein bL31, found in Desulfotalea psychrophila (strain LSv54 / DSM 12343).